The chain runs to 132 residues: Peptide methionine sulfoxide reductase MsrB (132 aa).

In terms of domain architecture, MsrB spans 8–130; sequence LDSWREELTE…NSASLKLVPR (123 aa). Zn(2+) is bound by residues C47, C50, C96, and C99. C119 acts as the Nucleophile in catalysis.

The protein belongs to the MsrB Met sulfoxide reductase family. Requires Zn(2+) as cofactor.

It carries out the reaction L-methionyl-[protein] + [thioredoxin]-disulfide + H2O = L-methionyl-(R)-S-oxide-[protein] + [thioredoxin]-dithiol. This is Peptide methionine sulfoxide reductase MsrB from Pseudomonas aeruginosa (strain UCBPP-PA14).